Here is a 195-residue protein sequence, read N- to C-terminus: Recombination protein RecR (195 aa).

The C4-type zinc finger occupies 53 to 68 (CSVCFNIDVKSPCSIC). The Toprim domain maps to 76–171 (QLLCIVEELG…KITRLACGIP (96 aa)).

This sequence belongs to the RecR family.

In terms of biological role, may play a role in DNA repair. It seems to be involved in an RecBC-independent recombinational process of DNA repair. It may act with RecF and RecO. The protein is Recombination protein RecR of Ehrlichia canis (strain Jake).